The following is a 237-amino-acid chain: Terpene cyclase spyD (237 aa).

A run of 7 helical transmembrane segments spans residues 17–37, 47–67, 71–91, 109–129, 138–158, 167–187, and 206–226; these read IYNVLVATAGMMWLINYIVTV, AIPLVSLCCNIAWEFTVVLVY, YLLFEIFCAMWLLVNMVIVYG, HLPLIVPLAILGCISGYYALA, IHGGGTFASFVMTVDCLCQLL, SWTMWLTRVLGSYAAIVGEFL, and WCTGMAVTMDILYACIFWYMG.

It belongs to the paxB family.

The protein resides in the membrane. The enzyme catalyses (S)-(2E,6E,10E)-epoxygeranylgeranyl-triacetate lactone = sartorypyrone F. It catalyses the reaction (S)-(2E,6E,10E)-epoxygeranylgeranyl-triacetate lactone = sartorypyrone D. Its pathway is secondary metabolite biosynthesis; terpenoid biosynthesis. Its function is as follows. Terpene cyclase; part of the gene cluster that mediates the biosynthesis of meroterpenoids called sartorypyrones. Within the pathway, spyD catalyzes the cyclization of epoxygeranylgeranyl-triacetate lactone. SpyD exhibits promiscuous activity, resulting in the formation of bicyclic sartorypyrone F and monocyclic sartorypyrone D. The biosynthesis of sartorypyrones begins with the production of triacetic acid lactone (TAL) by the NR-PKS spyA using one molecule of acetyl-CoA and two molecules of malonyl-CoA. The prenyltransferase spyF then conjugates geranylgeranyl pyrophosphate (GGPP) to TAL to form geranylgeranyl-triacetate lactone, for which the pathway-specific geranylgeranyl pyrophosphate synthase (GGPS) spyE is required to provide GGPP. Subsequently, geranylgeranyl-triacetate lactone is epoxidized at the terminal olein by the FAD-dependent monooxygenase spyC, followed by cyclization of the terpenoid component catalyzed by the terpene cyclase spyD to produce both the bicyclic sartorypyrone F and the monocyclic sartorypyrone D. Finally, the last step of the biosynthesis involves the acetylation of the meroterpenoids sartorypyrones D and F by the acetyltransferase SpyB to produce sartorypyrones A and G, respectively. This chain is Terpene cyclase spyD, found in Aspergillus fumigatus (strain ATCC MYA-4609 / CBS 101355 / FGSC A1100 / Af293) (Neosartorya fumigata).